The chain runs to 377 residues: Prostaglandin reductase-3 (377 aa).

An N6-acetyllysine modification is found at K35. Residues T185, S205, K209, Y224, S247, I269, and Y275 each contribute to the NADP(+) site. The residue at position 299 (S299) is a Phosphoserine. NADP(+) is bound by residues 303–305 and N361; that span reads FFL.

Belongs to the zinc-containing alcohol dehydrogenase family. Quinone oxidoreductase subfamily.

The protein resides in the peroxisome. It catalyses the reaction 13,14-dihydro-15-oxo-prostaglandin E2 + NADP(+) = 15-oxoprostaglandin E2 + NADPH + H(+). It carries out the reaction 13,14-dihydro-15-oxo-prostaglandin E1 + NADP(+) = 15-oxoprostaglandin E1 + NADPH + H(+). The enzyme catalyses 13,14-dihydro-15-oxo-PGF2alpha + NADP(+) = 15-oxoprostaglandin F2alpha + NADPH + H(+). The catalysed reaction is 13,14-dihydro-15-oxo-prostaglandin F1alpha + NADP(+) = 15-oxoprostaglandin F1alpha + NADPH + H(+). In terms of biological role, functions as 15-oxo-prostaglandin 13-reductase and acts on 15-keto-PGE1, 15-keto-PGE2, 15-keto-PGE1-alpha and 15-keto-PGE2-alpha with highest efficiency towards 15-keto-PGE2-alpha. Overexpression represses transcriptional activity of PPARG and inhibits adipocyte differentiation. The protein is Prostaglandin reductase-3 (PTGR3) of Bos taurus (Bovine).